The following is a 239-amino-acid chain: Tetraspanin-9 (239 aa).

Topologically, residues 1–13 (MARGCLCCVKYMM) are cytoplasmic. The helical transmembrane segment at 14 to 34 (FLFNLLFWLSGCGLLGVGIWL) threads the bilayer. At 35 to 55 (SVSQGSFATFSPSFPSLSAAN) the chain is on the extracellular side. Residues 56–76 (LVITLGSVVMVTGFLGCLGAI) traverse the membrane as a helical segment. Topologically, residues 77–85 (KENKCLLLS) are cytoplasmic. The chain crosses the membrane as a helical span at residues 86-106 (FFIVLLIILLAELILLILFFV). Residues 107–203 (YTEKVSENAK…VEEWLNDNKH (97 aa)) are Extracellular-facing. Asn-180 carries an N-linked (GlcNAc...) asparagine glycan. The chain crosses the membrane as a helical span at residues 204 to 224 (LLGTIAMCVLVLQLLGMAFSM). Topologically, residues 225–239 (TLYQQIHRAGKKYDA) are cytoplasmic.

This sequence belongs to the tetraspanin (TM4SF) family.

The protein resides in the membrane. In Danio rerio (Zebrafish), this protein is Tetraspanin-9 (tspan9).